The sequence spans 862 residues: Taxadiene synthase (862 aa).

Asp613, Asp617, Asn757, Thr761, and Glu765 together coordinate Mg(2+). Positions Asp613–Asp617 match the DDXXD motif motif.

It belongs to the terpene synthase family. It depends on Mg(2+) as a cofactor.

The catalysed reaction is (2E,6E,10E)-geranylgeranyl diphosphate = taxa-4(5),11(12)-diene + diphosphate. The protein operates within alkaloid biosynthesis; taxol biosynthesis; taxa-4(20),11-dien-5alpha-ol from geranylgeranyl diphosphate: step 1/2. Functionally, catalyzes the cyclization of the ubiquitous isoprenoid intermediate geranylgeranyl diphosphate to taxa-4,11-diene, the parent olefin with a taxane skeleton. The polypeptide is Taxadiene synthase (TDC1) (Taxus baccata (English yew)).